A 154-amino-acid chain; its full sequence is MGLSDGEWQLVLNVWGKVEADIPSHGQEVLIRLFKGHPETLEKFDKFKHLKSEDEMKASEDLKKHGATVLTALGGILKKKGHHEAEIKPLAQSHATKHKIPVKYLEFISESIIQVLQSKHPGDFGADAQGAMNKALELFRKDMASNYKELGFQG.

A Globin domain is found at 2–148 (GLSDGEWQLV…FRKDMASNYK (147 aa)). Ser-4 carries the post-translational modification Phosphoserine. Position 65 (His-65) interacts with nitrite. Residue His-65 participates in O2 binding. Phosphothreonine is present on Thr-68. Residue His-94 participates in heme b binding.

It belongs to the globin family. Monomeric.

It is found in the cytoplasm. Its subcellular location is the sarcoplasm. It catalyses the reaction Fe(III)-heme b-[protein] + nitric oxide + H2O = Fe(II)-heme b-[protein] + nitrite + 2 H(+). It carries out the reaction H2O2 + AH2 = A + 2 H2O. In terms of biological role, monomeric heme protein which primary function is to store oxygen and facilitate its diffusion within muscle tissues. Reversibly binds oxygen through a pentacoordinated heme iron and enables its timely and efficient release as needed during periods of heightened demand. Depending on the oxidative conditions of tissues and cells, and in addition to its ability to bind oxygen, it also has a nitrite reductase activity whereby it regulates the production of bioactive nitric oxide. Under stress conditions, like hypoxia and anoxia, it also protects cells against reactive oxygen species thanks to its pseudoperoxidase activity. This chain is Myoglobin (MB), found in Pongo pygmaeus (Bornean orangutan).